A 369-amino-acid polypeptide reads, in one-letter code: Glycine oxidase (369 aa).

Residues 14-15 (II), 34-35 (ES), 42-43 (TT), 47-49 (AGM), and valine 174 each bind FAD. 2 residues coordinate substrate: arginine 302 and arginine 329. An FAD-binding site is contributed by 327 to 333 (HFRNGIL).

This sequence belongs to the DAO family. ThiO subfamily. In terms of assembly, homotetramer. FAD is required as a cofactor.

It is found in the cytoplasm. The enzyme catalyses glycine + O2 + H2O = glyoxylate + H2O2 + NH4(+). It carries out the reaction N-ethylglycine + O2 + H2O = ethylamine + glyoxylate + H2O2. The catalysed reaction is sarcosine + O2 + H2O = methylamine + glyoxylate + H2O2. It catalyses the reaction D-alanine + O2 + H2O = pyruvate + H2O2 + NH4(+). The enzyme catalyses glyphosate + O2 + H2O = aminomethylphosphonate + glyoxylate + H2O2 + H(+). The protein operates within cofactor biosynthesis; thiamine diphosphate biosynthesis. Is competitively inhibited by glycolate. Its function is as follows. Catalyzes the FAD-dependent oxidative deamination of various amines and D-amino acids to yield the corresponding alpha-keto acids, ammonia/amine, and hydrogen peroxide. Oxidizes sarcosine (N-methylglycine), N-ethylglycine and glycine. Can also oxidize the herbicide glyphosate (N-phosphonomethylglycine). Displays lower activities on D-alanine, D-valine, D-proline and D-methionine. Does not act on L-amino acids and other D-amino acids. Is essential for thiamine biosynthesis since the oxidation of glycine catalyzed by ThiO generates the glycine imine intermediate (dehydroglycine) required for the biosynthesis of the thiazole ring of thiamine pyrophosphate. The polypeptide is Glycine oxidase (Bacillus subtilis (strain 168)).